Consider the following 470-residue polypeptide: Pyoverdine export outer membrane protein OpmQ (470 aa).

A signal peptide spans 1–18 (MTLPRHLCLLPLSLSLLA). C19 carries N-palmitoyl cysteine lipidation. The S-diacylglycerol cysteine moiety is linked to residue C19.

It belongs to the outer membrane factor (OMF) (TC 1.B.17) family. In terms of assembly, part of the tripartite efflux system PvdRT-OpmQ, which is composed of an inner membrane component with both ATPase and permease domains, PvdT, a periplasmic membrane fusion protein, PvdR, and an outer membrane component, OpmQ.

It is found in the cell outer membrane. Its function is as follows. Part of the tripartite efflux system PvdRT-OpmQ required for the secretion into the extracellular milieu of the siderophore pyoverdine (PVD), which is involved in iron acquisition. The system is responsible for export of newly synthesized PVD after the final steps of biosynthesis have taken place in the periplasm. It is also responsible for recycling of PVD after internalization of ferri-PVD into the periplasm by the outer-membrane receptor FpvA and release of iron from PVD, thus making PVD available for new cycles of iron uptake. Contributes to resistance against ampicillin. This Pseudomonas putida (strain ATCC 47054 / DSM 6125 / CFBP 8728 / NCIMB 11950 / KT2440) protein is Pyoverdine export outer membrane protein OpmQ.